We begin with the raw amino-acid sequence, 402 residues long: BTB and MATH domain-containing protein 40 (402 aa).

Residues 1–25 (MSDRHLYGSDHSYLSSKPSCSSCRR) form a disordered region. Low complexity predominate over residues 15-25 (SSKPSCSSCRR). One can recognise an MATH domain in the interval 43-177 (VLTQRWTVCN…DKSLVISCHI (135 aa)). Positions 222-295 (TDMTIVAGPL…IYAGVIKSDI (74 aa)) constitute a BTB domain.

In terms of assembly, interacts with cul-3.

Its pathway is protein modification; protein ubiquitination. Its function is as follows. Probable substrate-specific adapter of an E3 ubiquitin-protein ligase complex which mediates the ubiquitination and subsequent proteasomal degradation of target proteins. This is BTB and MATH domain-containing protein 40 (bath-40) from Caenorhabditis elegans.